We begin with the raw amino-acid sequence, 220 residues long: Artemin (220 aa).

The signal sequence occupies residues 1–39; it reads MELGLGGLSTLSHCPWPRQQPALWPTLAALALLSSVAEA. A propeptide spanning residues 40-107 is cleaved from the precursor; that stretch reads SLGSAPRSPA…ALPRGGRAAR (68 aa). The segment at 41 to 121 is disordered; sequence LGSAPRSPAP…GSRARAAGAR (81 aa). Pro residues-rich tracts occupy residues 47-58 and 81-98; these read SPAPREGPPPVL and PPPQ…PPSA. The span at 99 to 121 shows a compositional bias: low complexity; the sequence is LPRGGRAARAGGPGSRARAAGAR. Cystine bridges form between cysteine 123–cysteine 188, cysteine 150–cysteine 216, and cysteine 154–cysteine 218. Residue asparagine 202 is glycosylated (N-linked (GlcNAc...) asparagine).

It belongs to the TGF-beta family. GDNF subfamily. Homodimer; disulfide-linked. Interacts with GFRA3 coreceptor and RET: forms a 2:2:2 ternary complex composed of ARTN ligand, GFRA3 and RET receptor. Ubiquitous. Expressed at high levels in peripheral tissues including prostate, placenta, pancreas, heart, kidney, pituitary gland, lung and testis. Expressed at low levels in the brain.

It is found in the secreted. In terms of biological role, growth factor that supports the survival of sensory and sympathetic peripheral neurons in culture and also supports the survival of dopaminergic neurons of the ventral mid-brain. Acts by binding to its coreceptor, GFRA3, leading to autophosphorylation and activation of the RET receptor. Strong attractant of gut hematopoietic cells thus promoting the formation Peyer's patch-like structures, a major component of the gut-associated lymphoid tissue. This chain is Artemin, found in Homo sapiens (Human).